We begin with the raw amino-acid sequence, 141 residues long: Large ribosomal subunit protein bL17 (141 aa).

This sequence belongs to the bacterial ribosomal protein bL17 family. In terms of assembly, part of the 50S ribosomal subunit. Contacts protein L32.

In Agrobacterium fabrum (strain C58 / ATCC 33970) (Agrobacterium tumefaciens (strain C58)), this protein is Large ribosomal subunit protein bL17.